We begin with the raw amino-acid sequence, 754 residues long: 5-methyltetrahydropteroyltriglutamate--homocysteine methyltransferase (754 aa).

5-methyltetrahydropteroyltri-L-glutamate-binding positions include 15 to 18 and K114; that span reads RELK. Residues 430–432 and E483 contribute to the L-homocysteine site; that span reads IGS. Residues 430–432 and E483 each bind L-methionine; that span reads IGS. 5-methyltetrahydropteroyltri-L-glutamate-binding positions include 514-515 and W560; that span reads RC. D598 is a binding site for L-homocysteine. Position 598 (D598) interacts with L-methionine. E604 is a 5-methyltetrahydropteroyltri-L-glutamate binding site. Residues H641, C643, and E665 each contribute to the Zn(2+) site. H694 (proton donor) is an active-site residue. C726 contributes to the Zn(2+) binding site.

This sequence belongs to the vitamin-B12 independent methionine synthase family. It depends on Zn(2+) as a cofactor.

The catalysed reaction is 5-methyltetrahydropteroyltri-L-glutamate + L-homocysteine = tetrahydropteroyltri-L-glutamate + L-methionine. Its pathway is amino-acid biosynthesis; L-methionine biosynthesis via de novo pathway; L-methionine from L-homocysteine (MetE route): step 1/1. Its function is as follows. Catalyzes the transfer of a methyl group from 5-methyltetrahydrofolate to homocysteine resulting in methionine formation. This Campylobacter jejuni subsp. jejuni serotype O:2 (strain ATCC 700819 / NCTC 11168) protein is 5-methyltetrahydropteroyltriglutamate--homocysteine methyltransferase.